We begin with the raw amino-acid sequence, 422 residues long: L-2-hydroxyglutarate dehydrogenase (422 aa).

It belongs to the L2HGDH family. FAD serves as cofactor.

It is found in the cell inner membrane. The enzyme catalyses (S)-2-hydroxyglutarate + a quinone = a quinol + 2-oxoglutarate. It participates in amino-acid degradation. Its function is as follows. Catalyzes the dehydrogenation of L-2-hydroxyglutarate (L2HG) to alpha-ketoglutarate and couples to the respiratory chain by feeding electrons from the reaction into the membrane quinone pool. Functions in a L-lysine degradation pathway that proceeds via cadaverine, glutarate and L-2-hydroxyglutarate. Also displays some oxidase activity in vitro on L-2-hydroxyglutarate with O2 as the electron acceptor, but this activity is most likely not physiological. The polypeptide is L-2-hydroxyglutarate dehydrogenase (Salmonella houtenae).